Consider the following 279-residue polypeptide: DegV domain-containing protein M6_Spy1246 (279 aa).

The 275-residue stretch at 4–278 (IKIVTDSSIT…EGAFAVMVRY (275 aa)) folds into the DegV domain. Hexadecanoate-binding residues include threonine 62 and serine 95.

Its function is as follows. May bind long-chain fatty acids, such as palmitate, and may play a role in lipid transport or fatty acid metabolism. This Streptococcus pyogenes serotype M6 (strain ATCC BAA-946 / MGAS10394) protein is DegV domain-containing protein M6_Spy1246.